A 338-amino-acid polypeptide reads, in one-letter code: (2Z,6E)-hedycaryol synthase (338 aa).

Mg(2+)-binding residues include D82 and E87. Positions D82–E87 match the DDXXXE motif motif. Substrate is bound at residue R175. Mg(2+) contacts are provided by N221 and S225. Residues N221 to E229 carry the NXXXSXXXE motif motif. R228 serves as a coordination point for substrate. Mg(2+) is bound at residue E229.

The protein belongs to the terpene synthase family. Homodimer. It depends on Mg(2+) as a cofactor.

The enzyme catalyses (2E,6E)-farnesyl diphosphate + H2O = (2Z,6E)-hedycaryol + diphosphate. It participates in secondary metabolite biosynthesis; terpenoid biosynthesis. In terms of biological role, catalyzes the conversion of (2E,6E)-farnesyl diphosphate (FPP) into (2Z,6E)-hedycaryol via a 1,11-cyclization. This chain is (2Z,6E)-hedycaryol synthase, found in Kitasatospora setae (strain ATCC 33774 / DSM 43861 / JCM 3304 / KCC A-0304 / NBRC 14216 / KM-6054) (Streptomyces setae).